The following is a 264-amino-acid chain: MGQKIHPTGFRLAVSRNWASRWYANNTKFAGMLKEDIEVRDFLKKKLKNASVGRVVIERPARNARITIYSSRPGVVIGKKGEDIELLKAELQRRMGVPVHVNIEEIRKPETDAQLIADSITQQLERRIMFRRAMKRAMQNAMRLGAQGIKIMSSGRLNGIEIARTEWYREGRVPLHTLRADIDYGFSEAETTYGIIGVKVWVYKGDHLGRNDAPVVEEPQDDRRRRPGRPEGRRREGEGRPGGNRRGGAGAGRRAAPGDAKSGE.

The KH type-2 domain maps to 39–107 (VRDFLKKKLK…PVHVNIEEIR (69 aa)). The interval 211–264 (NDAPVVEEPQDDRRRRPGRPEGRRREGEGRPGGNRRGGAGAGRRAAPGDAKSGE) is disordered. The span at 221-239 (DDRRRRPGRPEGRRREGEG) shows a compositional bias: basic and acidic residues. The segment covering 240–251 (RPGGNRRGGAGA) has biased composition (gly residues).

It belongs to the universal ribosomal protein uS3 family. In terms of assembly, part of the 30S ribosomal subunit. Forms a tight complex with proteins S10 and S14.

Its function is as follows. Binds the lower part of the 30S subunit head. Binds mRNA in the 70S ribosome, positioning it for translation. This Cupriavidus pinatubonensis (strain JMP 134 / LMG 1197) (Cupriavidus necator (strain JMP 134)) protein is Small ribosomal subunit protein uS3.